The following is a 268-amino-acid chain: Myeloid leukemia factor 1 (268 aa).

Residues S6, S8, and S32 each carry the phosphoserine modification. An interaction with COPS3 region spans residues 50 to 125 (RVHNRRGHND…IGDEPPKVFQ (76 aa)). Residues 208-268 (PGRHNLENTR…KGSSVKSNKK (61 aa)) form a disordered region. 2 stretches are compositionally biased toward basic and acidic residues: residues 226 to 237 (PGSRELKRREKP) and 244 to 257 (EHGR…DKLH).

This sequence belongs to the MLF family. Interacts with CENPU. Also interacts with NRBP1/MADM, YWHAZ/14-3-3-zeta and HNRPUL2/MANP. NRBP1 recruits a serine kinase which phosphorylates both itself and MLF1. Phosphorylated MLF1 then binds to YWHAZ and is retained in the cytoplasm. Retained in the nucleus by binding to HNRPUL2. Binds to COPS3/CSN3 which is required for suppression of COP1 and activation of p53. Phosphorylation is required for binding to YWHAZ.

The protein localises to the cytoplasm. Its subcellular location is the nucleus. The protein resides in the cell projection. It localises to the cilium. It is found in the cytoskeleton. The protein localises to the cilium basal body. Functionally, involved in lineage commitment of primary hemopoietic progenitors by restricting erythroid formation and enhancing myeloid formation. Interferes with erythropoietin-induced erythroid terminal differentiation by preventing cells from exiting the cell cycle through suppression of CDKN1B/p27Kip1 levels. Suppresses COP1 activity via CSN3 which activates p53 and induces cell cycle arrest. Binds DNA and affects the expression of a number of genes so may function as a transcription factor in the nucleus. The polypeptide is Myeloid leukemia factor 1 (MLF1) (Pongo abelii (Sumatran orangutan)).